The primary structure comprises 184 residues: uncharacterized protein (184 aa).

The signal sequence occupies residues 1-23 (MFCLLHLCFYLANFASSIKRTHA).

It is found in the secreted. This is an uncharacterized protein from Homo sapiens (Human).